The primary structure comprises 508 residues: Glycerol kinase (508 aa).

T15 serves as a coordination point for ADP. T15, S16, and S17 together coordinate ATP. Residue T15 participates in sn-glycerol 3-phosphate binding. R19 contributes to the ADP binding site. Sn-glycerol 3-phosphate contacts are provided by R85, E86, Y138, and D251. Residues R85, E86, Y138, D251, and Q252 each contribute to the glycerol site. The ADP site is built by T273, G317, and G419. T273, G317, and G419 together coordinate ATP.

It belongs to the FGGY kinase family.

It catalyses the reaction glycerol + ATP = sn-glycerol 3-phosphate + ADP + H(+). It participates in polyol metabolism; glycerol degradation via glycerol kinase pathway; sn-glycerol 3-phosphate from glycerol: step 1/1. Its activity is regulated as follows. Inhibited by fructose 1,6-bisphosphate (FBP). In terms of biological role, key enzyme in the regulation of glycerol uptake and metabolism. Catalyzes the phosphorylation of glycerol to yield sn-glycerol 3-phosphate. This Mycoplasma pneumoniae (strain ATCC 29342 / M129 / Subtype 1) (Mycoplasmoides pneumoniae) protein is Glycerol kinase.